The chain runs to 229 residues: uncharacterized protein (229 aa).

7 helical membrane passes run 21–41 (IYSL…LMLY), 56–76 (MIYY…SGAA), 83–103 (ALPI…FIIV), 109–129 (TVFQ…IIGV), 141–161 (AMFA…FIGS), 162–182 (GMMS…LIAS), and 202–222 (WAVA…ISLL).

Belongs to the BI1 family.

The protein localises to the cell membrane. This is an uncharacterized protein from Streptococcus pyogenes serotype M6 (strain ATCC BAA-946 / MGAS10394).